We begin with the raw amino-acid sequence, 358 residues long: MRKIIHIDMDCYFAAVEMRDFPEYRGKPLAVGGSRERRGVISTCSYEARKFGVRSAMATSYAFKLCPNLILVPGRMQVYKEVSLHIREIFSRYTPLIEPLSLDEAYLDVSECQQYKGSATLIAEAIRRDILAETGLTASAGIAPVKFLAKVASDLNKPNGQYVITPEMLPEFVKTLSLRKIPGVGKVTAEKLTSLGLNTCGDVQVYSKQELLSRFGKLGAVLIERAHGIDGRGISIDRERKSVGVETTLAKDIYTLEQCQQVMPGLIQELALRLSRSAKDRKIHKQVVKLKFSDFKQTTIEHRTEEVSVNLFYDLLTQALARQDARGIRLVGISVGLADSTLYVASTLNTQTQLDLAL.

The UmuC domain maps to 4 to 185 (IIHIDMDCYF…LSLRKIPGVG (182 aa)). Positions 8 and 103 each coordinate Mg(2+). Residue glutamate 104 is part of the active site.

Belongs to the DNA polymerase type-Y family. Monomer. It depends on Mg(2+) as a cofactor.

It localises to the cytoplasm. The enzyme catalyses DNA(n) + a 2'-deoxyribonucleoside 5'-triphosphate = DNA(n+1) + diphosphate. Poorly processive, error-prone DNA polymerase involved in untargeted mutagenesis. Copies undamaged DNA at stalled replication forks, which arise in vivo from mismatched or misaligned primer ends. These misaligned primers can be extended by PolIV. Exhibits no 3'-5' exonuclease (proofreading) activity. May be involved in translesional synthesis, in conjunction with the beta clamp from PolIII. The sequence is that of DNA polymerase IV from Shewanella sp. (strain W3-18-1).